The primary structure comprises 329 residues: Phosphate acyltransferase (329 aa).

The protein belongs to the PlsX family. Homodimer. Probably interacts with PlsY.

Its subcellular location is the cytoplasm. The catalysed reaction is a fatty acyl-[ACP] + phosphate = an acyl phosphate + holo-[ACP]. Its pathway is lipid metabolism; phospholipid metabolism. Its function is as follows. Catalyzes the reversible formation of acyl-phosphate (acyl-PO(4)) from acyl-[acyl-carrier-protein] (acyl-ACP). This enzyme utilizes acyl-ACP as fatty acyl donor, but not acyl-CoA. The chain is Phosphate acyltransferase from Campylobacter concisus (strain 13826).